The sequence spans 89 residues: Signal recognition particle 19 kDa protein (89 aa).

The protein belongs to the SRP19 family. In terms of assembly, part of the signal recognition particle protein translocation system, which is composed of SRP and FtsY. Archaeal SRP consists of a 7S RNA molecule of 300 nucleotides and two protein subunits: SRP54 and SRP19.

Its subcellular location is the cytoplasm. In terms of biological role, involved in targeting and insertion of nascent membrane proteins into the cytoplasmic membrane. Binds directly to 7S RNA and mediates binding of the 54 kDa subunit of the SRP. In Methanococcus vannielii (strain ATCC 35089 / DSM 1224 / JCM 13029 / OCM 148 / SB), this protein is Signal recognition particle 19 kDa protein.